The primary structure comprises 149 residues: Protein AIM7 (149 aa).

Position 2 is an N-acetylserine (Ser-2). An ADF-H domain is found at 3–147 (NLYKIGTETR…DVEELREQLE (145 aa)). Position 137 is a phosphoserine (Ser-137).

This sequence belongs to the actin-binding proteins ADF family. GMF subfamily.

The protein resides in the cytoplasm. It localises to the nucleus. May be involved in mitochondrial organization and biogenesis. This chain is Protein AIM7 (AIM7), found in Saccharomyces cerevisiae (strain ATCC 204508 / S288c) (Baker's yeast).